A 347-amino-acid chain; its full sequence is Ribosomal RNA small subunit methyltransferase C (347 aa).

It belongs to the methyltransferase superfamily. RsmC family. As to quaternary structure, monomer.

It localises to the cytoplasm. The catalysed reaction is guanosine(1207) in 16S rRNA + S-adenosyl-L-methionine = N(2)-methylguanosine(1207) in 16S rRNA + S-adenosyl-L-homocysteine + H(+). Functionally, specifically methylates the guanine in position 1207 of 16S rRNA in the 30S particle. The chain is Ribosomal RNA small subunit methyltransferase C from Shewanella putrefaciens (strain CN-32 / ATCC BAA-453).